A 203-amino-acid polypeptide reads, in one-letter code: Early nodulin-like protein 9 (203 aa).

Positions 1 to 27 are cleaved as a signal peptide; it reads MARNLKSMMLCGFGLLCFLMIVDRAYA. Positions 28-130 constitute a Phytocyanin domain; it reads REFTVGGATG…NEKLVVIVMA (103 aa). Cys84 and Cys118 form a disulfide bridge. The N-linked (GlcNAc...) asparagine glycan is linked to Asn103. The tract at residues 134 to 181 is disordered; it reads GNKNTASSPPSPAPAPSGESAPSPPVSGTFEMTPAPTPTTSEDTPNSA. Ser180 carries the GPI-anchor amidated serine lipid modification. Positions 181 to 203 are cleaved as a propeptide — removed in mature form; it reads AASSLSFVAALLGAALASTLFLH.

Belongs to the early nodulin-like (ENODL) family. In terms of tissue distribution, specifically observed at the plasma membrane of sieve elements in vascular tissues of leaves, stems, roots, flowers and reproductive organs. Absent from companion cells.

It is found in the cell membrane. May act as a carbohydrate transporter. Mainly required for reproductive functions. This is Early nodulin-like protein 9 from Arabidopsis thaliana (Mouse-ear cress).